The following is a 156-amino-acid chain: Small ribosomal subunit protein uS7 (156 aa).

This sequence belongs to the universal ribosomal protein uS7 family. As to quaternary structure, part of the 30S ribosomal subunit. Contacts proteins S9 and S11.

One of the primary rRNA binding proteins, it binds directly to 16S rRNA where it nucleates assembly of the head domain of the 30S subunit. Is located at the subunit interface close to the decoding center, probably blocks exit of the E-site tRNA. This chain is Small ribosomal subunit protein uS7, found in Thiobacillus denitrificans (strain ATCC 25259 / T1).